Reading from the N-terminus, the 393-residue chain is NAD(P)H-quinone oxidoreductase subunit H, chloroplastic (393 aa).

Belongs to the complex I 49 kDa subunit family. In terms of assembly, NDH is composed of at least 16 different subunits, 5 of which are encoded in the nucleus.

Its subcellular location is the plastid. It is found in the chloroplast thylakoid membrane. The catalysed reaction is a plastoquinone + NADH + (n+1) H(+)(in) = a plastoquinol + NAD(+) + n H(+)(out). It catalyses the reaction a plastoquinone + NADPH + (n+1) H(+)(in) = a plastoquinol + NADP(+) + n H(+)(out). In terms of biological role, NDH shuttles electrons from NAD(P)H:plastoquinone, via FMN and iron-sulfur (Fe-S) centers, to quinones in the photosynthetic chain and possibly in a chloroplast respiratory chain. The immediate electron acceptor for the enzyme in this species is believed to be plastoquinone. Couples the redox reaction to proton translocation, and thus conserves the redox energy in a proton gradient. In Chlorokybus atmophyticus (Soil alga), this protein is NAD(P)H-quinone oxidoreductase subunit H, chloroplastic.